Here is a 129-residue protein sequence, read N- to C-terminus: Glycine cleavage system H protein (129 aa).

Positions 24–106 (VFTVGISEHA…YGDGWLFKIK (83 aa)) constitute a Lipoyl-binding domain. Lys65 is subject to N6-lipoyllysine.

This sequence belongs to the GcvH family. In terms of assembly, the glycine cleavage system is composed of four proteins: P, T, L and H. (R)-lipoate is required as a cofactor.

Its function is as follows. The glycine cleavage system catalyzes the degradation of glycine. The H protein shuttles the methylamine group of glycine from the P protein to the T protein. The protein is Glycine cleavage system H protein of Alteromonas mediterranea (strain DSM 17117 / CIP 110805 / LMG 28347 / Deep ecotype).